A 178-amino-acid polypeptide reads, in one-letter code: Large ribosomal subunit protein uL10 (178 aa).

The protein belongs to the universal ribosomal protein uL10 family. Part of the ribosomal stalk of the 50S ribosomal subunit. The N-terminus interacts with L11 and the large rRNA to form the base of the stalk. The C-terminus forms an elongated spine to which L12 dimers bind in a sequential fashion forming a multimeric L10(L12)X complex.

In terms of biological role, forms part of the ribosomal stalk, playing a central role in the interaction of the ribosome with GTP-bound translation factors. The polypeptide is Large ribosomal subunit protein uL10 (Dictyoglomus turgidum (strain DSM 6724 / Z-1310)).